We begin with the raw amino-acid sequence, 184 residues long: Protein PLANT CADMIUM RESISTANCE 4 (184 aa).

A compositionally biased stretch (polar residues) spans 1-10; sequence MGRPGSQPNE. The disordered stretch occupies residues 1–21; sequence MGRPGSQPNEAQPPPVQVQPT. The helical transmembrane segment at 96-116 threads the bilayer; the sequence is GGLLYGMIFFIGVPFVYSCMF.

Belongs to the cornifelin family.

The protein localises to the membrane. Functionally, may be involved in heavy metals transport. This Arabidopsis thaliana (Mouse-ear cress) protein is Protein PLANT CADMIUM RESISTANCE 4 (PCR4).